The primary structure comprises 173 residues: Zinc resistance-associated protein homolog (173 aa).

The N-terminal stretch at 1–28 (MNSKRIALGIIALATVVSLGTAANNAFA) is a signal peptide.

This sequence belongs to the ZraP family.

The protein is Zinc resistance-associated protein homolog of Nitratidesulfovibrio vulgaris (strain ATCC 29579 / DSM 644 / CCUG 34227 / NCIMB 8303 / VKM B-1760 / Hildenborough) (Desulfovibrio vulgaris).